The sequence spans 292 residues: Zinc finger protein OZF (292 aa).

10 consecutive C2H2-type zinc fingers follow at residues 16–38 (FACKVCGKIFSHKSTLTEHEHFH), 44–66 (FECNECGKAFSQKQYVIKHQNTH), 72–94 (LECNECGKSFSQKENLLTHQKIH), 100–122 (FECKDCGKAFIQKSNLIRHQRTH), 128–150 (FICKECGKTFSGKSNLTEHEKIH), 156–178 (FKCNECGTAFGQKKYLIKHQNIH), 184–206 (YECNECGKAFSQRTSLIVHVRIH), 212–234 (YECNVCGKAFSQSSSLTVHVRSH), 240–262 (YGCNECGKAFSQFSTLALHLRIH), and 268–290 (YQCSECGKAFSQKSHHIRHQKIH). Glycyl lysine isopeptide (Lys-Gly) (interchain with G-Cter in SUMO2) cross-links involve residues K28, K51, and K56. Glycyl lysine isopeptide (Lys-Gly) (interchain with G-Cter in SUMO) cross-links involve residues K157 and K169. K173 is covalently cross-linked (Glycyl lysine isopeptide (Lys-Gly) (interchain with G-Cter in SUMO2)). The interaction with TERF2IP stretch occupies residues 212 to 292 (YECNVCGKAF…HIRHQKIHTH (81 aa)).

It belongs to the krueppel C2H2-type zinc-finger protein family. As to quaternary structure, binds DNA. Interacts with SUMO conjugating enzyme UBC9/UBE2I. Interacts with the telomeric protein TERF2IP.

The protein resides in the nucleus. The protein is Zinc finger protein OZF (ZNF146) of Bos taurus (Bovine).